The sequence spans 295 residues: Protease HtpX (295 aa).

A run of 2 helical transmembrane segments spans residues 4 to 24 (ILLF…TLSL) and 41 to 61 (SSLL…SLFI). Histidine 147 is a binding site for Zn(2+). Residue glutamate 148 is part of the active site. Histidine 151 is a binding site for Zn(2+). Helical transmembrane passes span 158–178 (VTLA…ARII) and 199–219 (VATI…VMWF). A Zn(2+)-binding site is contributed by glutamate 224.

Belongs to the peptidase M48B family. The cofactor is Zn(2+).

Its subcellular location is the cell inner membrane. The sequence is that of Protease HtpX from Pseudomonas putida (strain ATCC 700007 / DSM 6899 / JCM 31910 / BCRC 17059 / LMG 24140 / F1).